The primary structure comprises 74 residues: Acyl carrier protein (74 aa).

The Carrier domain maps to 1 to 73 (MAVFEKVQEI…DLVAYVEEKS (73 aa)). At serine 35 the chain carries O-(pantetheine 4'-phosphoryl)serine.

This sequence belongs to the acyl carrier protein (ACP) family. Post-translationally, 4'-phosphopantetheine is transferred from CoA to a specific serine of apo-ACP by AcpS. This modification is essential for activity because fatty acids are bound in thioester linkage to the sulfhydryl of the prosthetic group.

It localises to the cytoplasm. It functions in the pathway lipid metabolism; fatty acid biosynthesis. Its function is as follows. Carrier of the growing fatty acid chain in fatty acid biosynthesis. This Streptococcus pyogenes serotype M1 protein is Acyl carrier protein.